Consider the following 244-residue polypeptide: MRNILLTIEYDGTGYFGWQKQPNKKTIQGTIEEAIKKLTGEEVNLIGSGRTDRGVHALNQKANFKTSSKIPTDKFPLALNSVLPGDISIKDAVEAPLDFSARYSARQKTYKYLIYNKKSRPALLRNYAYYYPYQLDVDAMQRACEYFIGEYDFKSFCSADSEAKTTIRRVYNAYLTFENECIAIYITANGFLYNMARIIAGTILDVGAGKLKPMDIPLIIESKDRTKAGKTLPPWGLYLVDVVY.

Residue aspartate 52 is the Nucleophile of the active site. Substrate is bound at residue tyrosine 110.

The protein belongs to the tRNA pseudouridine synthase TruA family. In terms of assembly, homodimer.

The enzyme catalyses uridine(38/39/40) in tRNA = pseudouridine(38/39/40) in tRNA. Formation of pseudouridine at positions 38, 39 and 40 in the anticodon stem and loop of transfer RNAs. In Caldicellulosiruptor bescii (strain ATCC BAA-1888 / DSM 6725 / KCTC 15123 / Z-1320) (Anaerocellum thermophilum), this protein is tRNA pseudouridine synthase A.